Consider the following 263-residue polypeptide: E3 ubiquitin-protein ligase SINA-like 8 (263 aa).

The RING-type; degenerate zinc finger occupies 35–71 (CPICCEGLTCPIFQCENGHLACSSCCPKLRNKCPACP). An SBD region spans residues 75 to 261 (ILESILVTCP…IKLSIVETSN (187 aa)). The SIAH-type zinc finger occupies 78–136 (SILVTCPNDMFGCTESFLYGKKSTHEEECIFSLCSCPSLDCEYSGRYEDLYDHYKLTHI). C83, C90, H102, C106, C113, C118, H130, and H135 together coordinate Zn(2+).

It belongs to the SINA (Seven in absentia) family.

It catalyses the reaction S-ubiquitinyl-[E2 ubiquitin-conjugating enzyme]-L-cysteine + [acceptor protein]-L-lysine = [E2 ubiquitin-conjugating enzyme]-L-cysteine + N(6)-ubiquitinyl-[acceptor protein]-L-lysine.. It functions in the pathway protein modification; protein ubiquitination. In terms of biological role, E3 ubiquitin-protein ligase that mediates ubiquitination and subsequent proteasomal degradation of target proteins. E3 ubiquitin ligases accept ubiquitin from an E2 ubiquitin-conjugating enzyme in the form of a thioester and then directly transfers the ubiquitin to targeted substrates. It probably triggers the ubiquitin-mediated degradation of different substrates. In Arabidopsis thaliana (Mouse-ear cress), this protein is E3 ubiquitin-protein ligase SINA-like 8.